Reading from the N-terminus, the 56-residue chain is Large ribosomal subunit protein bL32 (56 aa).

A disordered region spans residues 1–37 (MAVQQNKKSRSKRGMRRSHDALSTAQLSVDATSGELH). The segment covering 7–16 (KKSRSKRGMR) has biased composition (basic residues). Residues 21–31 (ALSTAQLSVDA) show a composition bias toward polar residues.

This sequence belongs to the bacterial ribosomal protein bL32 family.

This Shewanella loihica (strain ATCC BAA-1088 / PV-4) protein is Large ribosomal subunit protein bL32.